The primary structure comprises 457 residues: tRNA modification GTPase MnmE (457 aa).

3 residues coordinate (6S)-5-formyl-5,6,7,8-tetrahydrofolate: R24, E81, and K124. The region spanning 220-379 (GIQLVLAGAP…LKQKILHVVG (160 aa)) is the TrmE-type G domain. Position 230 (N230) interacts with K(+). Residues 230 to 235 (NVGKSS), 249 to 255 (TPIAGTT), and 274 to 277 (DTAG) contribute to the GTP site. Residue S234 participates in Mg(2+) binding. K(+)-binding residues include T249, I251, and T254. T255 is a binding site for Mg(2+). K457 contributes to the (6S)-5-formyl-5,6,7,8-tetrahydrofolate binding site.

The protein belongs to the TRAFAC class TrmE-Era-EngA-EngB-Septin-like GTPase superfamily. TrmE GTPase family. In terms of assembly, homodimer. Heterotetramer of two MnmE and two MnmG subunits. Requires K(+) as cofactor.

Its subcellular location is the cytoplasm. Functionally, exhibits a very high intrinsic GTPase hydrolysis rate. Involved in the addition of a carboxymethylaminomethyl (cmnm) group at the wobble position (U34) of certain tRNAs, forming tRNA-cmnm(5)s(2)U34. This Polynucleobacter asymbioticus (strain DSM 18221 / CIP 109841 / QLW-P1DMWA-1) (Polynucleobacter necessarius subsp. asymbioticus) protein is tRNA modification GTPase MnmE.